The primary structure comprises 32 residues: Peptide tarsal-less AA (32 aa).

Residues 1 to 32 are disordered; the sequence is MLDPTGTYRRPRDTQDSRQKRRQDCLDPTGQY. Repeat 1 spans residues 2–8; that stretch reads LDPTGTY. The tract at residues 2-32 is 2 X 7 AA repeats of L-D-P-T-G-[TQ]-Y; the sequence is LDPTGTYRRPRDTQDSRQKRRQDCLDPTGQY. A compositionally biased stretch (basic and acidic residues) spans 10–25; it reads RPRDTQDSRQKRRQDC. Copy 2 of the repeat occupies 26 to 32; the sequence is LDPTGQY.

The protein localises to the cytoplasm. The protein resides in the nucleus. In terms of biological role, one of four peptides (tal-1A, tal-2A, tal-3A and tal-AA) produced from a polycistronic gene that function redundantly in several developmental processes. Required in early stages of leg development for the intercalation of the tarsal segments during the mid-third instar stage and later for tarsal joint formation. Promotes the post-translational modification of ovo isoform B (svb) into its active form which in turn initiates trichome development and promotes tarsal joint development. This is likely due to recruitment of the E3 ubiquitin-protein ligase Ubr3 to svb for ubiquitination of its N-terminus, converting svb into a transcriptional activator. Also enhances interaction of Ubr3 with Diap1. Required for correct wing and leg formation through its regulation of several genes including those in the Notch signaling pathway. Essential for denticle formation and may have a role in the developmental timing of trichome differentiation. Essential for the development of taenidial folds in the trachea. The sequence is that of Peptide tarsal-less AA from Drosophila melanogaster (Fruit fly).